The chain runs to 361 residues: G-protein coupled receptor 52 (361 aa).

The Extracellular segment spans residues 1-44 (MNDSRWTEWRILNTSSGILNVSERHSCPLGFGHYSAVDVCIFET). 3 N-linked (GlcNAc...) asparagine glycosylation sites follow: Asn2, Asn13, and Asn20. The helical transmembrane segment at 45-65 (IVIVLLTFLIIAGNLTVIFVF) threads the bilayer. At 66 to 87 (HCAPLLHHYTTSYFIQTMAYAD) the chain is on the cytoplasmic side. Residues 88–108 (LFVGVSCLVPTLSLLHYSTGI) form a helical membrane-spanning segment. Over 109 to 115 (HESLTCQ) the chain is Extracellular. Cys114 and Cys193 are joined by a disulfide. The helical transmembrane segment at 116–136 (VFGYIISVLKSVSMACLACIS) threads the bilayer. The Cytoplasmic segment spans residues 137–159 (VDRYLAITKPLSYNQLVTPCRLR). The chain crosses the membrane as a helical span at residues 160 to 180 (ICIILIWIYSCLIFLPSFFGW). The Extracellular segment spans residues 181 to 200 (GKPGYHGDIFEWCATSWLTS). A helical transmembrane segment spans residues 201–221 (AYFTGFIVCLLYAPAALVVCF). The Cytoplasmic portion of the chain corresponds to 222–265 (TYFHIFKICRQHTKEINDRRARFPSHEAAASRDAGHSPDRRYAM). A helical membrane pass occupies residues 266-286 (VLFRITSVFYMLWLPYIIYFL). The Extracellular segment spans residues 287–296 (LESSRVLDNP). The helical transmembrane segment at 297–317 (TLSFLTTWLAISNSFCNCVIY) threads the bilayer. Residues 318-361 (SLSNSVFRLGLRRLSETMCTSCMCVKDKEARDPKPRKRANSCSI) lie on the Cytoplasmic side of the membrane.

It belongs to the G-protein coupled receptor 1 family.

It is found in the cell membrane. Functionally, G- protein coupled receptor activated by antipsychotics reserpine leading to an increase in intracellular cAMP and its internalization. May play a role in locomotor activity through modulation of dopamine, NMDA and ADORA2A-induced locomotor activity. These behavioral changes are accompanied by modulation of the dopamine receptor signaling pathway in striatum. Modulates HTT level via cAMP-dependent but PKA independent mechanisms throught activation of RAB39B that translocates HTT to the endoplasmic reticulum, thus avoiding proteasome degradation. The chain is G-protein coupled receptor 52 from Bos taurus (Bovine).